A 597-amino-acid polypeptide reads, in one-letter code: MTFTPSLNSGLAVYRRLLSYTRPYRWIFAASIITMAIYAATETGLAALMKPLMDGSFIERDPATIQIIPLLLIGLFVIRGGANFITQYGLKWVARRVVRDLREQMFCHLLALPARYYDQKASGQLLAKLIYDVEQVSNAATDAILTIIRDSLTILGLLAWMAYLNGLLTLIILVTAPLIALIIWWVSHRFRRISRKIQNSMGDVSQVAQETIEGHREVKIFGGQTYEAERFDQVNEQNRRQTMKMAATDAISQPVVQLIAVLGLAGVIHLATRESMLAQISVGTFISFITAMMLLLGPVKRLTKINGTLQRGIAAAQSIFGLLAETPEADRGQQSLRRARGAIRFEHLSFCYEPAKGPVLENIDLEIKPYQTIALVGHSGSGKSTLVSLLARFYETTSGRILIDEMDIQTLRLTELRRQIALVSQQIILFNDTIAHNIAYGSYQQTSKQDIIRAAEAAHAMEFINRLPDGLDTVIGEKGVLLSGGQRQRLAIARALLKDAPILILDEATASLDTEAERHIQAALETLMRQRTTLVIAHRLSTVENADQIIVLHQGQIIERGTHSQLLARESHYAGLYRLQFRHSHEHVSPLSANVGL.

The next 6 helical transmembrane spans lie at 26-46 (WIFA…TGLA), 65-85 (IQII…ANFI), 144-164 (ILTI…MAYL), 166-186 (GLLT…IWWV), 250-270 (AISQ…VIHL), and 276-296 (MLAQ…MLLL). The region spanning 29–311 (AASIITMAIY…LTKINGTLQR (283 aa)) is the ABC transmembrane type-1 domain. The region spanning 343-579 (IRFEHLSFCY…ESHYAGLYRL (237 aa)) is the ABC transporter domain. An ATP-binding site is contributed by 377 to 384 (GHSGSGKS).

Belongs to the ABC transporter superfamily. Lipid exporter (TC 3.A.1.106) family. As to quaternary structure, homodimer.

It localises to the cell inner membrane. It catalyses the reaction ATP + H2O + lipid A-core oligosaccharideSide 1 = ADP + phosphate + lipid A-core oligosaccharideSide 2.. In terms of biological role, involved in lipopolysaccharide (LPS) biosynthesis. Translocates lipid A-core from the inner to the outer leaflet of the inner membrane. Transmembrane domains (TMD) form a pore in the inner membrane and the ATP-binding domain (NBD) is responsible for energy generation. The protein is ATP-dependent lipid A-core flippase of Nitrosococcus oceani (strain ATCC 19707 / BCRC 17464 / JCM 30415 / NCIMB 11848 / C-107).